Here is a 544-residue protein sequence, read N- to C-terminus: Chaperonin GroEL (544 aa).

ATP contacts are provided by residues 30 to 33 (TLGP), K51, 87 to 91 (DGTTT), G415, and D495.

The protein belongs to the chaperonin (HSP60) family. In terms of assembly, forms a cylinder of 14 subunits composed of two heptameric rings stacked back-to-back. Interacts with the co-chaperonin GroES.

It is found in the cytoplasm. It carries out the reaction ATP + H2O + a folded polypeptide = ADP + phosphate + an unfolded polypeptide.. Together with its co-chaperonin GroES, plays an essential role in assisting protein folding. The GroEL-GroES system forms a nano-cage that allows encapsulation of the non-native substrate proteins and provides a physical environment optimized to promote and accelerate protein folding. This is Chaperonin GroEL from Neisseria meningitidis serogroup B (strain ATCC BAA-335 / MC58).